Reading from the N-terminus, the 715-residue chain is Polyribonucleotide nucleotidyltransferase (715 aa).

Mg(2+) is bound by residues aspartate 498 and aspartate 504. Residues 565–625 (PKVCMMQIKP…ETVKKTVAFI (61 aa)) form the KH domain. Positions 635–709 (GTCYQASILR…RIDFLLLPKK (75 aa)) constitute an S1 motif domain.

Belongs to the polyribonucleotide nucleotidyltransferase family. Mg(2+) serves as cofactor.

Its subcellular location is the cytoplasm. It carries out the reaction RNA(n+1) + phosphate = RNA(n) + a ribonucleoside 5'-diphosphate. Involved in mRNA degradation. Catalyzes the phosphorolysis of single-stranded polyribonucleotides processively in the 3'- to 5'-direction. This chain is Polyribonucleotide nucleotidyltransferase, found in Aster yellows witches'-broom phytoplasma (strain AYWB).